The primary structure comprises 359 residues: Lipopolysaccharide 1,6-galactosyltransferase (359 aa).

UDP-binding residues include glutamine 244 and glutamate 276.

It belongs to the glycosyltransferase group 1 family. Glycosyltransferase 4 subfamily.

It carries out the reaction alpha-D-Glc-(1-&gt;3)-[L-alpha-D-Hep-(1-&gt;7)]-4-O-PO3(2-)-L-alpha-D-Hep-(1-&gt;3)-4-O-PO3(2-)-L-alpha-D-Hep-(1-&gt;5)-[alpha-Kdo-(2-&gt;4)]-alpha-Kdo-(2-&gt;6)-lipid A + UDP-alpha-D-galactose = alpha-D-Gal-(1-&gt;6)-alpha-D-Glc-(1-&gt;3)-[L-alpha-D-Hep-(1-&gt;7)]-4-O-PO3(2-)-L-alpha-D-Hep-(1-&gt;3)-4-O-PO3(2-)-L-alpha-D-Hep-(1-&gt;5)-[alpha-Kdo-(2-&gt;4)]-alpha-Kdo-(2-&gt;6)-lipid A + UDP + H(+). Its pathway is bacterial outer membrane biogenesis; LPS core biosynthesis. Its function is as follows. Galactosyltransferase involved in the biosynthesis of the core oligosaccharide region of lipopolysaccharide (LPS). Catalyzes the addition of galactose from UDP-galactose to the first glucose residue of the LPS outer core. This Salmonella typhimurium (strain LT2 / SGSC1412 / ATCC 700720) protein is Lipopolysaccharide 1,6-galactosyltransferase.